The primary structure comprises 228 residues: 2-C-methyl-D-erythritol 4-phosphate cytidylyltransferase (228 aa).

It belongs to the IspD/TarI cytidylyltransferase family. IspD subfamily.

The catalysed reaction is 2-C-methyl-D-erythritol 4-phosphate + CTP + H(+) = 4-CDP-2-C-methyl-D-erythritol + diphosphate. Its pathway is isoprenoid biosynthesis; isopentenyl diphosphate biosynthesis via DXP pathway; isopentenyl diphosphate from 1-deoxy-D-xylulose 5-phosphate: step 2/6. Catalyzes the formation of 4-diphosphocytidyl-2-C-methyl-D-erythritol from CTP and 2-C-methyl-D-erythritol 4-phosphate (MEP). This is 2-C-methyl-D-erythritol 4-phosphate cytidylyltransferase from Actinobacillus pleuropneumoniae serotype 3 (strain JL03).